Consider the following 432-residue polypeptide: MKLVTRMWSILIVFFLAVLQPAQAEVRIVIDEGVDSARPIAVVPFKWNGPGSAPADIADIIAADLRHSGKFNPIPVNRMPQHPTSVSEVNPEAWAALGIDAVVVGHVTPANGSFNIAYQLVDTIGATGTAGTVLTQNQYTVTAKWLRYGAHTVSDEVFEKLTGIRGAFRTRIAYIVQKHGGSQPYEVRVSDYDGFNQFVVNRSAQPLMSPAWSHDGKKLAYVSFENKKSQLVVQDLGSGARKVVASFNGHNGAPAFSPDGSRLAFASSKDGVLNIYVMNLGSGQISQLTSGTGNNTEPSWSPDGQTIVFTSDRSGSPQVYQMSASGGGASLVSTGGRSYSGQMTADGSAIIMISRDNIVKKDLASGSTEVLSSTFLDENPSISPNGIMIIYSSTQGLGKVLQLVSADGRFKARLPGNDGQVKFPAWSPYLTK.

Residues 1–24 (MKLVTRMWSILIVFFLAVLQPAQA) form the signal peptide.

This sequence belongs to the TolB family. In terms of assembly, the Tol-Pal system is composed of five core proteins: the inner membrane proteins TolA, TolQ and TolR, the periplasmic protein TolB and the outer membrane protein Pal. They form a network linking the inner and outer membranes and the peptidoglycan layer.

It is found in the periplasm. Functionally, part of the Tol-Pal system, which plays a role in outer membrane invagination during cell division and is important for maintaining outer membrane integrity. The protein is Tol-Pal system protein TolB of Pasteurella multocida (strain Pm70).